Here is a 318-residue protein sequence, read N- to C-terminus: Taste receptor type 2 member 60 (318 aa).

Over Met-1–Val-7 the chain is Extracellular. A helical transmembrane segment spans residues Leu-8 to Arg-28. Residues Leu-29–Ala-40 are Cytoplasmic-facing. Residues Ala-41–Ser-61 traverse the membrane as a helical segment. The Extracellular segment spans residues Leu-62–Pro-88. The helical transmembrane segment at Tyr-89 to Trp-109 threads the bilayer. Over Ser-110–Pro-128 the chain is Cytoplasmic. Residues Val-129 to Val-149 traverse the membrane as a helical segment. Topologically, residues Gly-150–Asp-183 are extracellular. A glycan (N-linked (GlcNAc...) asparagine) is linked at Asn-179. The helical transmembrane segment at Ser-184–Met-204 threads the bilayer. The Cytoplasmic portion of the chain corresponds to Pro-205–Phe-234. Residues Arg-235–Leu-255 form a helical membrane-spanning segment. Over Phe-256–Val-264 the chain is Extracellular. Residues Phe-265 to Ile-285 traverse the membrane as a helical segment. Residues Tyr-286 to Pro-318 lie on the Cytoplasmic side of the membrane.

This sequence belongs to the G-protein coupled receptor T2R family. In terms of tissue distribution, expressed in subsets of taste receptor cells of the tongue and exclusively in gustducin-positive cells.

It is found in the membrane. Functionally, receptor that may play a role in the perception of bitterness and is gustducin-linked. May play a role in sensing the chemical composition of the gastrointestinal content. The activity of this receptor may stimulate alpha gustducin, mediate PLC-beta-2 activation and lead to the gating of TRPM5. The sequence is that of Taste receptor type 2 member 60 (TAS2R60) from Homo sapiens (Human).